Here is a 292-residue protein sequence, read N- to C-terminus: Cyclin-dependent kinase 5 homolog (292 aa).

Positions 4–285 (YSKIEKLGEG…AAAALKHPYF (282 aa)) constitute a Protein kinase domain. ATP contacts are provided by residues 10 to 18 (LGEGTYGIV) and lysine 33. Threonine 14 is subject to Phosphothreonine. Position 15 is a phosphotyrosine (tyrosine 15). Catalysis depends on aspartate 126, which acts as the Proton acceptor.

Belongs to the protein kinase superfamily. CMGC Ser/Thr protein kinase family. CDC2/CDKX subfamily.

It catalyses the reaction L-seryl-[protein] + ATP = O-phospho-L-seryl-[protein] + ADP + H(+). The enzyme catalyses L-threonyl-[protein] + ATP = O-phospho-L-threonyl-[protein] + ADP + H(+). Phosphorylation at Thr-14 or Tyr-15 inactivates the enzyme. The chain is Cyclin-dependent kinase 5 homolog (cdk5) from Dictyostelium discoideum (Social amoeba).